Here is a 311-residue protein sequence, read N- to C-terminus: Haloalkane dehalogenase (311 aa).

The AB hydrolase-1 domain occupies 30–148 (AIVFQHGNPS…WDDFPDEVAQ (119 aa)). Aspartate 107 functions as the Nucleophile in the catalytic mechanism. Residue glutamate 131 is the Proton donor of the active site. The active-site Proton acceptor is histidine 272.

It belongs to the haloalkane dehalogenase family. Type 2 subfamily. As to quaternary structure, monomer.

It carries out the reaction 1-haloalkane + H2O = a halide anion + a primary alcohol + H(+). Catalyzes hydrolytic cleavage of carbon-halogen bonds in halogenated aliphatic compounds, leading to the formation of the corresponding primary alcohols, halide ions and protons. The sequence is that of Haloalkane dehalogenase from Mycolicibacterium smegmatis (strain ATCC 700084 / mc(2)155) (Mycobacterium smegmatis).